A 157-amino-acid chain; its full sequence is Probable succinate transporter subunit YjjB (157 aa).

5 consecutive transmembrane segments (helical) span residues 8–28, 34–54, 55–75, 87–107, and 129–149; these read LALM…AMVF, ALPW…LMMS, AGFN…SIGI, VFTV…TAMI, and FLKA…PGLW.

The protein belongs to the ThrE exporter (TC 2.A.79) family. As to quaternary structure, the transporter is composed of YjjB and YjjP.

It localises to the cell inner membrane. Its function is as follows. Involved in succinate export with YjjP. Both proteins are required for export. The protein is Probable succinate transporter subunit YjjB of Salmonella typhi.